A 166-amino-acid polypeptide reads, in one-letter code: Putative membrane protein 162 (166 aa).

Residue Met-1 is a topological domain, intravirion. The chain crosses the membrane as a helical span at residues 2 to 22; sequence YYPAVQVLIGIILVDNFNTEF. Topologically, residues 23 to 166 are virion surface; that stretch reads LSSEKKNCKT…TIMGIARNIL (144 aa).

Belongs to the asfivirus envelope protein p22 family.

It is found in the virion membrane. Its subcellular location is the host cell membrane. The protein is Putative membrane protein 162 of African swine fever virus (isolate Tick/Malawi/Lil 20-1/1983) (ASFV).